Here is a 156-residue protein sequence, read N- to C-terminus: D-aminoacyl-tRNA deacylase (156 aa).

The Gly-cisPro motif, important for rejection of L-amino acids motif lies at 139–140 (GP).

Belongs to the DTD family. As to quaternary structure, homodimer.

The protein resides in the cytoplasm. It carries out the reaction glycyl-tRNA(Ala) + H2O = tRNA(Ala) + glycine + H(+). The enzyme catalyses a D-aminoacyl-tRNA + H2O = a tRNA + a D-alpha-amino acid + H(+). Its function is as follows. An aminoacyl-tRNA editing enzyme that deacylates mischarged D-aminoacyl-tRNAs. Also deacylates mischarged glycyl-tRNA(Ala), protecting cells against glycine mischarging by AlaRS. Acts via tRNA-based rather than protein-based catalysis; rejects L-amino acids rather than detecting D-amino acids in the active site. By recycling D-aminoacyl-tRNA to D-amino acids and free tRNA molecules, this enzyme counteracts the toxicity associated with the formation of D-aminoacyl-tRNA entities in vivo and helps enforce protein L-homochirality. The protein is D-aminoacyl-tRNA deacylase of Marinobacter nauticus (strain ATCC 700491 / DSM 11845 / VT8) (Marinobacter aquaeolei).